A 218-amino-acid polypeptide reads, in one-letter code: Thiamine-phosphate synthase (218 aa).

4-amino-2-methyl-5-(diphosphooxymethyl)pyrimidine-binding positions include 45-49 and Asn77; that span reads QYREK. Residues Asp78 and Asp97 each coordinate Mg(2+). Ser116 lines the 4-amino-2-methyl-5-(diphosphooxymethyl)pyrimidine pocket. 142–144 is a 2-[(2R,5Z)-2-carboxy-4-methylthiazol-5(2H)-ylidene]ethyl phosphate binding site; it reads TKT. Lys145 is a 4-amino-2-methyl-5-(diphosphooxymethyl)pyrimidine binding site. Residues Gly173 and 193-194 contribute to the 2-[(2R,5Z)-2-carboxy-4-methylthiazol-5(2H)-ylidene]ethyl phosphate site; that span reads VT.

The protein belongs to the thiamine-phosphate synthase family. The cofactor is Mg(2+).

The catalysed reaction is 2-[(2R,5Z)-2-carboxy-4-methylthiazol-5(2H)-ylidene]ethyl phosphate + 4-amino-2-methyl-5-(diphosphooxymethyl)pyrimidine + 2 H(+) = thiamine phosphate + CO2 + diphosphate. It catalyses the reaction 2-(2-carboxy-4-methylthiazol-5-yl)ethyl phosphate + 4-amino-2-methyl-5-(diphosphooxymethyl)pyrimidine + 2 H(+) = thiamine phosphate + CO2 + diphosphate. It carries out the reaction 4-methyl-5-(2-phosphooxyethyl)-thiazole + 4-amino-2-methyl-5-(diphosphooxymethyl)pyrimidine + H(+) = thiamine phosphate + diphosphate. It participates in cofactor biosynthesis; thiamine diphosphate biosynthesis; thiamine phosphate from 4-amino-2-methyl-5-diphosphomethylpyrimidine and 4-methyl-5-(2-phosphoethyl)-thiazole: step 1/1. Functionally, condenses 4-methyl-5-(beta-hydroxyethyl)thiazole monophosphate (THZ-P) and 2-methyl-4-amino-5-hydroxymethyl pyrimidine pyrophosphate (HMP-PP) to form thiamine monophosphate (TMP). This is Thiamine-phosphate synthase from Pelotomaculum thermopropionicum (strain DSM 13744 / JCM 10971 / SI).